Consider the following 688-residue polypeptide: Potassium-transporting ATPase ATP-binding subunit (688 aa).

The next 4 helical transmembrane spans lie at 35-55 (VMFV…AMLA), 62-82 (ALFT…ANFA), 219-239 (IALT…CVTL), and 260-280 (VLIA…LSAI). Asp313 functions as the 4-aspartylphosphate intermediate in the catalytic mechanism. ATP is bound by residues Asp350, Glu354, 383 to 390 (FSAMTRMS), and Lys401. 2 residues coordinate Mg(2+): Asp524 and Asp528. The next 3 helical transmembrane spans lie at 594-614 (FAII…LNIM), 622-642 (AVLS…PLAL), and 667-687 (GLIA…LLIL).

This sequence belongs to the cation transport ATPase (P-type) (TC 3.A.3) family. Type IA subfamily. As to quaternary structure, the system is composed of three essential subunits: KdpA, KdpB and KdpC.

The protein localises to the cell inner membrane. The catalysed reaction is K(+)(out) + ATP + H2O = K(+)(in) + ADP + phosphate + H(+). Its function is as follows. Part of the high-affinity ATP-driven potassium transport (or Kdp) system, which catalyzes the hydrolysis of ATP coupled with the electrogenic transport of potassium into the cytoplasm. This subunit is responsible for energy coupling to the transport system and for the release of the potassium ions to the cytoplasm. The protein is Potassium-transporting ATPase ATP-binding subunit of Photorhabdus laumondii subsp. laumondii (strain DSM 15139 / CIP 105565 / TT01) (Photorhabdus luminescens subsp. laumondii).